Reading from the N-terminus, the 80-residue chain is Acyl carrier protein (80 aa).

The region spanning 4-79 (DEIFSKVRSI…DVVNFIKKRK (76 aa)) is the Carrier domain. Position 39 is an O-(pantetheine 4'-phosphoryl)serine (Ser39).

It belongs to the acyl carrier protein (ACP) family. 4'-phosphopantetheine is transferred from CoA to a specific serine of apo-ACP by AcpS. This modification is essential for activity because fatty acids are bound in thioester linkage to the sulfhydryl of the prosthetic group.

The protein resides in the cytoplasm. Its pathway is lipid metabolism; fatty acid biosynthesis. Carrier of the growing fatty acid chain in fatty acid biosynthesis. The polypeptide is Acyl carrier protein (Borrelia garinii subsp. bavariensis (strain ATCC BAA-2496 / DSM 23469 / PBi) (Borreliella bavariensis)).